A 316-amino-acid polypeptide reads, in one-letter code: SHC-transforming protein homolog 1 (316 aa).

Positions 16-158 constitute a PID domain; the sequence is GVSLSATYLG…LIDVLTTAIN (143 aa). Residues 211-307 form the SH2 domain; it reads WYHGNLSRED…ETSLNLIRPV (97 aa). The segment at 292–316 is disordered; sequence SEGRDRETSLNLIRPVPCPGSDDIE.

Interacts (via PID domain) with daf-2 (via cytoplasmic domain). Interacts with mek-1; the interaction is independent of mek-1 catalytic activity and is constitutive. Interacts (via N-terminus) with mlk-1 (via NPQY motif when phosphorylated on tyrosine residue). Does not interact with jkk-1 or sek-1. Interacts (via SH2 domain) with svh-2. Interacts with svh-4. Expressed in hypodermis, intestine, head and tail neurons, pharynx, gonads, vulva and body muscles.

Its subcellular location is the cytoplasm. It is found in the nucleus. It localises to the cell membrane. Functionally, scaffold protein which plays an important role in the activation of the JNK pathway composed of mlk-1, mek-1 and kgb-1; by bringing together mek-1 and mlk-1, promotes mlk-1-mediated phosphorylation and activation of mek-1 which in turn phosphorylates kgb-1. In addition, negatively modulates the activation of the insulin/IGF-1-like signaling (IIS) probably by inhibiting the insulin receptor daf-2. Positively regulates the activity of the transcription factor daf-16/FOXO by both inhibiting IIS and activating the JNK pathway. Plays a role in maintaining gonadal basement membrane integrity through activation of the JNK pathway components mek-1 and jnk-1. Involved in the response to several environmental stresses including heavy metal ions (Cu(2+) and Cd(2+)), heat, oxidative and protein misfolding (ER) stresses. Plays a role in gonad and germline development following the L1 diapause. Plays a role in life span and egg laying. Plays a role in axon regeneration after injury. The protein is SHC-transforming protein homolog 1 of Caenorhabditis elegans.